Reading from the N-terminus, the 780-residue chain is MAARGGRSEPPQLAEYSCSYTVSRPVYSELAFQQQRERRLPERRTLRDSLARSCSCSRKRAFGVVKTLLPILDWLPKYRVKEWLLSDIISGVSTGLVGTLQGMAYALLAAVPVQFGLYSAFFPILTYFVFGTSRHISVGPFPVVSLMVGSVVLSMAPDDHFLVPSGNGSALNSTTLDTGTRDAARVLLASTLTLLVGIIQLVFGGLQIGFIVRYLADPLVGGFTTAAAFQVLVSQLKIVLNVSTKNYNGILSIIYTLIEIFQNIGDTNIADFIAGLLTIIVCMAVKELNDRFKHRIPVPIPIEVIVTIIATAISYGANLEKNYNAGIVKSIPSGFLPPVLPSVGLFSDMLAASFSIAVVAYAIAVSVGKVYATKHDYVIDGNQEFIAFGISNVFSGFFSCFVATTALSRTAVQESTGGKTQVAGLISAVIVMVAIVALGRLLEPLQKSVLAAVVIANLKGMFMQVCDVPRLWKQNKTDAVIWVFTCIMSIILGLDLGLLAGLLFALLTVVLRVQFPSWNGLGSVPSTDIYKSITHYKNLEEPEGVKILRFSSPIFYGNVDGFKKCINSTVGFDAIRVYNKRLKALRRIQKLIKKGQLRATKNGIISDIGSSNNAFEPDEDVEEPEELNIPTKEIEIQVDWNSELPVKVNVPKVPIHSLVLDCGAVSFLDVVGVRSLRMIVKEFQRIDVNVYFALLQDDVLEKMEQCGFFDDNIRKDRFFLTVHDAILHLQNQVKSREGQDSLLETVARIRDCKDPLDLMEAEMNAEELDVQDEAMRRLAS.

Topologically, residues 1–87 (MAARGGRSEP…YRVKEWLLSD (87 aa)) are cytoplasmic. Residues 88–108 (IISGVSTGLVGTLQGMAYALL) form a helical membrane-spanning segment. A topological domain (extracellular) is located at residue Ala-109. Residues 110-130 (AVPVQFGLYSAFFPILTYFVF) form a helical membrane-spanning segment. At 131 to 135 (GTSRH) the chain is on the cytoplasmic side. The helical transmembrane segment at 136-156 (ISVGPFPVVSLMVGSVVLSMA) threads the bilayer. Residues 157–191 (PDDHFLVPSGNGSALNSTTLDTGTRDAARVLLAST) lie on the Extracellular side of the membrane. The helical transmembrane segment at 192–212 (LTLLVGIIQLVFGGLQIGFIV) threads the bilayer. Topologically, residues 213–218 (RYLADP) are cytoplasmic. A helical transmembrane segment spans residues 219 to 239 (LVGGFTTAAAFQVLVSQLKIV). At 240-263 (LNVSTKNYNGILSIIYTLIEIFQN) the chain is on the extracellular side. A helical transmembrane segment spans residues 264 to 284 (IGDTNIADFIAGLLTIIVCMA). The Cytoplasmic segment spans residues 285–295 (VKELNDRFKHR). Residues 296 to 316 (IPVPIPIEVIVTIIATAISYG) traverse the membrane as a helical segment. The Extracellular segment spans residues 317–344 (ANLEKNYNAGIVKSIPSGFLPPVLPSVG). Residues 345-365 (LFSDMLAASFSIAVVAYAIAV) form a helical membrane-spanning segment. At 366–384 (SVGKVYATKHDYVIDGNQE) the chain is on the cytoplasmic side. A helical membrane pass occupies residues 385–405 (FIAFGISNVFSGFFSCFVATT). Residues 406–421 (ALSRTAVQESTGGKTQ) are Extracellular-facing. A helical membrane pass occupies residues 422–442 (VAGLISAVIVMVAIVALGRLL). The Cytoplasmic portion of the chain corresponds to 443 to 448 (EPLQKS). A helical membrane pass occupies residues 449 to 469 (VLAAVVIANLKGMFMQVCDVP). The Extracellular segment spans residues 470–486 (RLWKQNKTDAVIWVFTC). A helical transmembrane segment spans residues 487–507 (IMSIILGLDLGLLAGLLFALL). The Cytoplasmic segment spans residues 508 to 780 (TVVLRVQFPS…QDEAMRRLAS (273 aa)). An STAS domain is found at 535-729 (HYKNLEEPEG…LTVHDAILHL (195 aa)).

Belongs to the SLC26A/SulP transporter (TC 2.A.53) family. As to quaternary structure, interacts with IQGAP1. This interaction enhances the chloride-bicarbonate exchange activity of SLC26A4. In terms of tissue distribution, highly expressed in the kidney (at protein level). Throughout the endolymphatic duct and sac, in distinct areas of the utricle and saccule, and in the external sulcus region within the cochlea. Expressed in the parotid gland.

It localises to the apical cell membrane. Its subcellular location is the cell membrane. It catalyses the reaction chloride(in) = chloride(out). The enzyme catalyses iodide(out) = iodide(in). The catalysed reaction is hydrogencarbonate(in) + chloride(out) = hydrogencarbonate(out) + chloride(in). It carries out the reaction iodide(in) + hydrogencarbonate(out) = iodide(out) + hydrogencarbonate(in). It catalyses the reaction iodide(in) + chloride(out) = iodide(out) + chloride(in). The enzyme catalyses formate(in) + chloride(out) = formate(out) + chloride(in). Its function is as follows. Sodium-independent transporter of chloride and iodide. Mediates electroneutral iodide-chloride, iodide-bicarbonate and chloride-bicarbonate exchange with 1:1 stoichiometry. Mediates elctroneutral chloride-formate exchange. This is Pendrin (Slc26a4) from Mus musculus (Mouse).